The chain runs to 95 residues: Small ribosomal subunit protein uS19 (95 aa).

Residues 76–95 form a disordered region; that stretch reads PTRRFGGHADKKAATKGQVR.

It belongs to the universal ribosomal protein uS19 family.

Functionally, protein S19 forms a complex with S13 that binds strongly to the 16S ribosomal RNA. The chain is Small ribosomal subunit protein uS19 from Pseudothermotoga lettingae (strain ATCC BAA-301 / DSM 14385 / NBRC 107922 / TMO) (Thermotoga lettingae).